The sequence spans 460 residues: Keratin, type I cytoskeletal 27 (460 aa).

The interval 1-83 (MSVRFSSASR…GNEHGLLSGN (83 aa)) is head. Positions 84-119 (EKVTMQNLNDRLASYLDNVRALEEANADLEQKIKGW) are coil 1A. The IF rod domain maps to 84-399 (EKVTMQNLND…RLIDGEDGSC (316 aa)). Residues 120–141 (YEKFGPGSCRGLDHDYSRYFTV) form a linker 1 region. Positions 142–233 (IDDLRNQIIS…KNHEEEMKAL (92 aa)) are coil 1B. The segment at 234-256 (QCAAGGNVNVEMNAAPGVDLTVL) is linker 12. Residues 257 to 395 (LNNMRAEYEA…ETYCRLIDGE (139 aa)) are coil 2. A tail region spans residues 396–460 (DGSCAKSKGY…NVKSEQRVPS (65 aa)). Residues 435–460 (LSSRVHSVEEKSTKVNNVKSEQRVPS) form a disordered region. A compositionally biased stretch (polar residues) spans 448-460 (KVNNVKSEQRVPS).

This sequence belongs to the intermediate filament family. Heterotetramer of two type I and two type II keratins. Interacts with KRT6A to form filaments.

The protein resides in the cytoplasm. In terms of biological role, essential for the proper assembly of type I and type II keratin protein complexes and formation of keratin intermediate filaments in the inner root sheath (irs). This Bos taurus (Bovine) protein is Keratin, type I cytoskeletal 27.